Consider the following 132-residue polypeptide: Small ribosomal subunit protein uS8 (132 aa).

The protein belongs to the universal ribosomal protein uS8 family. As to quaternary structure, part of the 30S ribosomal subunit. Contacts proteins S5 and S12.

Functionally, one of the primary rRNA binding proteins, it binds directly to 16S rRNA central domain where it helps coordinate assembly of the platform of the 30S subunit. The sequence is that of Small ribosomal subunit protein uS8 from Natranaerobius thermophilus (strain ATCC BAA-1301 / DSM 18059 / JW/NM-WN-LF).